Here is a 422-residue protein sequence, read N- to C-terminus: Regulator of sigma-W protease RasP (422 aa).

4 helical membrane-spanning segments follow: residues 6–26 (VIAF…GHLL), 175–195 (IAAG…MLGL), 346–366 (IVNL…VNLL), and 394–414 (EAFV…VVTW). His20 contributes to the Zn(2+) binding site. Glu21 is an active-site residue. Residue His24 coordinates Zn(2+). Positions 186 to 271 (AYVILVMLGL…TLHISVTPEA (86 aa)) constitute a PDZ domain.

It belongs to the peptidase M50B family. Zn(2+) is required as a cofactor.

The protein resides in the cell membrane. Is responsible for site-2 cleavage of the RsiW anti-sigma factor. This results, after a third proteolytic step catalyzed by the ClpXP protease, in the release of SigW and the transcription activation of the genes under the control of the sigma-W factor. Can also cleave liberated signal peptides of PenP and Mpr, probably within in the cell membrane. In Bacillus subtilis (strain 168), this protein is Regulator of sigma-W protease RasP.